Reading from the N-terminus, the 546-residue chain is Branchpoint-bridging protein (546 aa).

2 disordered regions span residues 1-141 (MWRP…ASAK) and 178-199 (TGDVVPPEGQRSPSPTPQYDAY). Residues 50-128 (RQERERDARD…DRGDSNEDGP (79 aa)) are compositionally biased toward basic and acidic residues. The KH domain occupies 251 to 330 (YIPVKEFPEI…SKVKTCVALI (80 aa)). 2 CCHC-type zinc fingers span residues 368-385 (QLCQNCGEKGHRRWECPQ) and 393-410 (VICRICGGAGHMARDCRG).

This sequence belongs to the BBP/SF1 family.

It is found in the nucleus. In terms of biological role, necessary for the splicing of pre-mRNA. Has a role in the recognition of the branch site (5'-UACUAAC-3'), the pyrimidine tract and the 3'-splice site at the 3'-end of introns. In Cryptococcus neoformans var. neoformans serotype D (strain B-3501A) (Filobasidiella neoformans), this protein is Branchpoint-bridging protein (BBP).